The primary structure comprises 179 residues: Large ribosomal subunit protein uL6 (179 aa).

The protein belongs to the universal ribosomal protein uL6 family. In terms of assembly, part of the 50S ribosomal subunit.

Its function is as follows. This protein binds to the 23S rRNA, and is important in its secondary structure. It is located near the subunit interface in the base of the L7/L12 stalk, and near the tRNA binding site of the peptidyltransferase center. The chain is Large ribosomal subunit protein uL6 from Mycobacterium ulcerans (strain Agy99).